The chain runs to 140 residues: Fatty acid-binding protein 12 (140 aa).

Residues Arg107 and 127 to 129 (RTY) each bind a fatty acid.

It belongs to the calycin superfamily. Fatty-acid binding protein (FABP) family. As to expression, expressed in a number of retinoblastoma cell lines.

In terms of biological role, may play a role in lipid transport. The sequence is that of Fatty acid-binding protein 12 (FABP12) from Homo sapiens (Human).